The primary structure comprises 652 residues: uncharacterized protein (652 aa).

2 stretches are compositionally biased toward basic and acidic residues: residues 1 to 13 and 641 to 652; these read MSVTESKAKTERK and ATERTDNLADAA. Disordered regions lie at residues 1 to 21 and 628 to 652; these read MSVTESKAKTERKSSRKPAKT and VPGWMCAPRPQTDATERTDNLADAA.

The protein belongs to the ParB family.

This is an uncharacterized protein from Escherichia coli O157:H7.